Here is a 536-residue protein sequence, read N- to C-terminus: Bifunctional purine biosynthesis protein PurH (536 aa).

Residues 8-158 (IPAPDEVRIK…KNHAYVTVVT (151 aa)) form the MGS-like domain.

This sequence belongs to the PurH family.

The catalysed reaction is (6R)-10-formyltetrahydrofolate + 5-amino-1-(5-phospho-beta-D-ribosyl)imidazole-4-carboxamide = 5-formamido-1-(5-phospho-D-ribosyl)imidazole-4-carboxamide + (6S)-5,6,7,8-tetrahydrofolate. It carries out the reaction IMP + H2O = 5-formamido-1-(5-phospho-D-ribosyl)imidazole-4-carboxamide. It participates in purine metabolism; IMP biosynthesis via de novo pathway; 5-formamido-1-(5-phospho-D-ribosyl)imidazole-4-carboxamide from 5-amino-1-(5-phospho-D-ribosyl)imidazole-4-carboxamide (10-formyl THF route): step 1/1. Its pathway is purine metabolism; IMP biosynthesis via de novo pathway; IMP from 5-formamido-1-(5-phospho-D-ribosyl)imidazole-4-carboxamide: step 1/1. The protein is Bifunctional purine biosynthesis protein PurH of Sinorhizobium medicae (strain WSM419) (Ensifer medicae).